The following is a 144-amino-acid chain: Putative HTH-type transcriptional regulator aq_268 (144 aa).

The 132-residue stretch at 2–133 (IFSDTVRYAL…KGTTIKDLIN (132 aa)) folds into the HTH rrf2-type domain.

This is Putative HTH-type transcriptional regulator aq_268 from Aquifex aeolicus (strain VF5).